We begin with the raw amino-acid sequence, 385 residues long: Heterogeneous nuclear ribonucleoprotein 87F (385 aa).

RRM domains lie at 24-101 (RKLF…RAVP) and 115-192 (KKLF…KAIA). Disordered stretches follow at residues 192 to 289 (AKQD…WNGG) and 305 to 385 (GNGG…NRRY). Composition is skewed to gly residues over residues 199-289 (QGGG…WNGG) and 305-317 (GNGGGGGGGGGFG). The segment covering 319 to 336 (EYQQSYGGGPQRNSNFGN) has biased composition (polar residues). 2 stretches are compositionally biased toward gly residues: residues 344–362 (QGGGGGGFNKGNQGGGQGF) and 369–385 (TGGGGQGGNMGGGNRRY).

The protein resides in the nucleus. It is found in the cytoplasm. Functionally, this protein is a component of ribonucleosomes. Could be needed to organize a concentration gradient of a dorsalizing morphogen (Dm) originating in the germinal vesicle. The polypeptide is Heterogeneous nuclear ribonucleoprotein 87F (Hrb87F) (Drosophila melanogaster (Fruit fly)).